Reading from the N-terminus, the 32-residue chain is ASFSVVGDIMGTSMQNLHQLLQMPFGCGEQNM.

The isoglutamyl cysteine thioester (Cys-Gln) cross-link spans 27–30 (CGEQ).

It belongs to the protease inhibitor I39 (alpha-2-macroglobulin) family. In terms of assembly, homotetramer, which consists of two pairs of disulfide-linked chains.

The protein localises to the secreted. In terms of biological role, is able to inhibit all four classes of proteinases by a unique 'trapping' mechanism. This protein has a peptide stretch, called the 'bait region' which contains specific cleavage sites for different proteinases. When a proteinase cleaves the bait region, a conformational change is induced in the protein which traps the proteinase. The entrapped enzyme remains active against low molecular weight substrates (activity against high molecular weight substrates is greatly reduced). Following cleavage in the bait region a thioester bond is hydrolyzed and mediates the covalent binding of the protein to the proteinase. The chain is Ovostatin from Anas platyrhynchos (Mallard).